A 274-amino-acid polypeptide reads, in one-letter code: Phosphate import ATP-binding protein PstB (274 aa).

Residues 1–11 (MSEISIATSVP) are compositionally biased toward polar residues. The interval 1–21 (MSEISIATSVPSGPGPLIGNQ) is disordered. The ABC transporter domain occupies 28 to 269 (VIVRDLNFYY…PNDRRTQDYI (242 aa)). 60 to 67 (GPSGCGKS) is an ATP binding site.

The protein belongs to the ABC transporter superfamily. Phosphate importer (TC 3.A.1.7) family. In terms of assembly, the complex is composed of two ATP-binding proteins (PstB), two transmembrane proteins (PstC and PstA) and a solute-binding protein (PstS).

The protein resides in the cell inner membrane. The catalysed reaction is phosphate(out) + ATP + H2O = ADP + 2 phosphate(in) + H(+). In terms of biological role, part of the ABC transporter complex PstSACB involved in phosphate import. Responsible for energy coupling to the transport system. In Rhodopseudomonas palustris (strain BisB5), this protein is Phosphate import ATP-binding protein PstB.